The sequence spans 368 residues: Agmatine deiminase (368 aa).

C357 (amidino-cysteine intermediate) is an active-site residue.

It belongs to the agmatine deiminase family. As to quaternary structure, homodimer.

The enzyme catalyses agmatine + H2O = N-carbamoylputrescine + NH4(+). Its pathway is amine and polyamine biosynthesis; putrescine biosynthesis via agmatine pathway; N-carbamoylputrescine from agmatine: step 1/1. In terms of biological role, mediates the hydrolysis of agmatine into N-carbamoylputrescine in the arginine decarboxylase (ADC) pathway of putrescine biosynthesis, a basic polyamine. The chain is Agmatine deiminase from Pseudomonas aeruginosa (strain UCBPP-PA14).